Here is a 262-residue protein sequence, read N- to C-terminus: Acyl-[acyl-carrier-protein]--UDP-N-acetylglucosamine O-acyltransferase (262 aa).

It belongs to the transferase hexapeptide repeat family. LpxA subfamily. Homotrimer.

The protein localises to the cytoplasm. The enzyme catalyses a (3R)-hydroxyacyl-[ACP] + UDP-N-acetyl-alpha-D-glucosamine = a UDP-3-O-[(3R)-3-hydroxyacyl]-N-acetyl-alpha-D-glucosamine + holo-[ACP]. Its pathway is glycolipid biosynthesis; lipid IV(A) biosynthesis; lipid IV(A) from (3R)-3-hydroxytetradecanoyl-[acyl-carrier-protein] and UDP-N-acetyl-alpha-D-glucosamine: step 1/6. Involved in the biosynthesis of lipid A, a phosphorylated glycolipid that anchors the lipopolysaccharide to the outer membrane of the cell. The sequence is that of Acyl-[acyl-carrier-protein]--UDP-N-acetylglucosamine O-acyltransferase from Pasteurella multocida (strain Pm70).